The following is a 511-amino-acid chain: Glucans biosynthesis protein G (511 aa).

An N-terminal signal peptide occupies residues 1 to 22; sequence MMKMRWLSAAVMLTLYTSSSWA.

Belongs to the OpgD/OpgG family.

The protein localises to the periplasm. It participates in glycan metabolism; osmoregulated periplasmic glucan (OPG) biosynthesis. Functionally, involved in the biosynthesis of osmoregulated periplasmic glucans (OPGs). In Escherichia fergusonii (strain ATCC 35469 / DSM 13698 / CCUG 18766 / IAM 14443 / JCM 21226 / LMG 7866 / NBRC 102419 / NCTC 12128 / CDC 0568-73), this protein is Glucans biosynthesis protein G.